Here is a 334-residue protein sequence, read N- to C-terminus: L-lactate dehydrogenase B chain (334 aa).

30–58 lines the NAD(+) pocket; that stretch reads GQVGMACAVSVLLKELADELALVDILEDK. Residues Arg-107, Asn-139, and Arg-170 each coordinate substrate. Asn-139 is a binding site for NAD(+). His-194 acts as the Proton acceptor in catalysis. Thr-249 serves as a coordination point for substrate.

The protein belongs to the LDH/MDH superfamily. LDH family. As to quaternary structure, homotetramer.

The protein localises to the cytoplasm. The catalysed reaction is (S)-lactate + NAD(+) = pyruvate + NADH + H(+). It participates in fermentation; pyruvate fermentation to lactate; (S)-lactate from pyruvate: step 1/1. In terms of biological role, interconverts simultaneously and stereospecifically pyruvate and lactate with concomitant interconversion of NADH and NAD(+). The protein is L-lactate dehydrogenase B chain (ldhb) of Xenopus laevis (African clawed frog).